The sequence spans 353 residues: DNA integrity scanning protein DisA (353 aa).

The DAC domain occupies 6–144 (DKELMNILKI…GGIKYVLRDS (139 aa)). Residues glycine 73, leucine 91, and 104 to 108 (TRHRT) each bind ATP.

It belongs to the DisA family. Homooctamer. Mg(2+) is required as a cofactor.

The enzyme catalyses 2 ATP = 3',3'-c-di-AMP + 2 diphosphate. In terms of biological role, participates in a DNA-damage check-point that is active prior to asymmetric division when DNA is damaged. DisA forms globular foci that rapidly scan along the chromosomes during sporulation, searching for lesions. When a lesion is present, DisA pauses at the lesion site. This triggers a cellular response that culminates in a temporary block in sporulation initiation. Its function is as follows. Also has diadenylate cyclase activity, catalyzing the condensation of 2 ATP molecules into cyclic di-AMP (c-di-AMP). c-di-AMP acts as a signaling molecule that couples DNA integrity with progression of sporulation. The rise in c-di-AMP level generated by DisA while scanning the chromosome, operates as a positive signal that advances sporulation; upon encountering a lesion, the DisA focus arrests at the damaged site and halts c-di-AMP synthesis. The sequence is that of DNA integrity scanning protein DisA from Clostridium botulinum (strain Loch Maree / Type A3).